Reading from the N-terminus, the 147-residue chain is Large ribosomal subunit protein uL13 (147 aa).

Belongs to the universal ribosomal protein uL13 family. As to quaternary structure, part of the 50S ribosomal subunit.

In terms of biological role, this protein is one of the early assembly proteins of the 50S ribosomal subunit, although it is not seen to bind rRNA by itself. It is important during the early stages of 50S assembly. This is Large ribosomal subunit protein uL13 from Mycobacteroides abscessus (strain ATCC 19977 / DSM 44196 / CCUG 20993 / CIP 104536 / JCM 13569 / NCTC 13031 / TMC 1543 / L948) (Mycobacterium abscessus).